The chain runs to 309 residues: Protein FdhE (309 aa).

This sequence belongs to the FdhE family.

The protein resides in the cytoplasm. Its function is as follows. Necessary for formate dehydrogenase activity. In Shigella boydii serotype 18 (strain CDC 3083-94 / BS512), this protein is Protein FdhE.